Reading from the N-terminus, the 359-residue chain is MAWALAVILLPRLLAAAAAAAAVTSRGDVTVVCHDLETVEVTWGSGPDHHGANLSLEFRYGTGALQPCPRYFLSGAGVTSGCILPAARAGLLELALRDGGGAMVFKARQRASAWLKPRPPWNVTLLWTPDGDVTVSWPAHSYLGLDYEVQHRESNDDEDAWQTTSGPCCDLTVGGLDPARCYDFRVRASPRAAHYGLEAQPSEWTAVTRLSGAASAASCTASPAPSPALAPPLLPLGCGLAALLTLSLLLAALRLRRVKDALLPCVPDPSGSFPGLFEKHHGNFQAWIADAQATAPPARTEEEDDLIHPKAKRVEPEDGTSLCTVPRPPSFEPRGPGGGAMVSVGGATFMVGDSGYMTL.

A signal peptide spans 1-19; the sequence is MAWALAVILLPRLLAAAAA. The Extracellular segment spans residues 20 to 232; sequence AAAVTSRGDV…PAPSPALAPP (213 aa). An N-linked (GlcNAc...) asparagine glycan is attached at Asn53. An intrachain disulfide couples Cys68 to Cys82. In terms of domain architecture, Fibronectin type-III spans 119–213; it reads PPWNVTLLWT…WTAVTRLSGA (95 aa). Asn122 carries an N-linked (GlcNAc...) asparagine glycan. 2 disulfide bridges follow: Cys168–Cys169 and Cys181–Cys219. The WSXWS motif signature appears at 201–205; sequence PSEWT. Residues 233–253 traverse the membrane as a helical segment; sequence LLPLGCGLAALLTLSLLLAAL. Topologically, residues 254-359 are cytoplasmic; that stretch reads RLRRVKDALL…MVGDSGYMTL (106 aa). Positions 262–270 match the Box 1 motif motif; that stretch reads LLPCVPDPS. The segment at 312 to 336 is disordered; the sequence is KRVEPEDGTSLCTVPRPPSFEPRGP.

It belongs to the type I cytokine receptor family. Type 5 subfamily. As to quaternary structure, the TSLP receptor is a heterodimer of CRLF2 and IL7R. Binding of TSLP to CRLF2/TSLPR is a mechanistic prerequisite for recruitment of IL7R to the high-affinity ternary complex. In terms of tissue distribution, high level of expression in liver, lung and testis. Also expressed in heart, brain, spleen, thymus and bone marrow. Highly expressed in progenitors and myeloid cells. Isoform 2 is expressed in primary hemotopoietic cells.

Its subcellular location is the cell membrane. The protein resides in the secreted. Its function is as follows. Receptor for thymic stromal lymphopoietin (TSLP). Forms a functional complex with TSLP and IL7R which is capable of stimulating cell proliferation through activation of STAT3 and STAT5. Also activates JAK2. Implicated in the development of the hematopoietic system. This is Cytokine receptor-like factor 2 (Crlf2) from Mus musculus (Mouse).